The following is a 1522-amino-acid chain: Lysophospholipase nte1 (1522 aa).

The tract at residues 1 to 24 is disordered; that stretch reads MADGVTQVDSTGLHSFSPSPSLSS. Topologically, residues 1–65 are cytoplasmic; it reads MADGVTQVDS…LPPVPTTMAG (65 aa). Over residues 15 to 24 the composition is skewed to low complexity; the sequence is SFSPSPSLSS. The helical transmembrane segment at 66 to 86 threads the bilayer; it reads WIGWVFSFFFQVIPSVLYWII. Residues 87–108 lie on the Lumenal side of the membrane; sequence TFSTITLPTWLFTLFSMSLTFT. The chain crosses the membrane as a helical span at residues 109-129; it reads MNFTTLLLIVLAVVSTISWFI. Over 130-1522 the chain is Cytoplasmic; that stretch reads RYRFLNMYSR…RTLAPRRASI (1393 aa). 3 disordered regions span residues 308 to 384, 523 to 544, and 757 to 776; these read VPNS…SVHP, RAAT…GVSP, and TTTA…SRRR. A compositionally biased stretch (basic residues) spans 369–381; that stretch reads ESRKHSSRKRRKS. Residues 680-800 and 840-960 each bind a nucleoside 3',5'-cyclic phosphate; these read GGTS…AVAS and RLTS…IAQR. The PNPLA domain occupies 1219–1383; it reads LVLGGGGARG…IDNLTVDHMK (165 aa). The short motif at 1223 to 1228 is the GXGXXG element; that stretch reads GGGARG. Residues 1250–1254 carry the GXSXG motif; sequence GTSIG. Ser-1252 functions as the Nucleophile in the catalytic mechanism. Asp-1370 serves as the catalytic Proton acceptor. A DGA/G motif is present at residues 1370 to 1372; that stretch reads DGG. The disordered stretch occupies residues 1501 to 1522; that stretch reads LPEETEEKKKLQRTLAPRRASI.

This sequence belongs to the NTE family.

It localises to the endoplasmic reticulum membrane. It catalyses the reaction a 1-acyl-sn-glycero-3-phosphocholine + H2O = sn-glycerol 3-phosphocholine + a fatty acid + H(+). Inhibited by organophosphorus esters. Intracellular phospholipase B that catalyzes the double deacylation of phosphatidylcholine (PC) to glycerophosphocholine (GroPCho). Plays an important role in membrane lipid homeostasis. Responsible for the rapid PC turnover in response to inositol, elevated temperatures, or when choline is present in the growth medium. The chain is Lysophospholipase nte1 (nte1) from Aspergillus fumigatus (strain ATCC MYA-4609 / CBS 101355 / FGSC A1100 / Af293) (Neosartorya fumigata).